The primary structure comprises 23 residues: Magainin-B2 (23 aa).

Expressed by the skin glands.

The protein localises to the secreted. Functionally, has antimicrobial activity against Gram-negative bacterium E.coli ATCC 25922 (MIC=50 uM) and against fungus C.albicans ATCC 90028 (MIC=100 uM). Has no hemolytic activity against human erythrocytes even at high concentrations. In Xenopus borealis (Kenyan clawed frog), this protein is Magainin-B2.